The primary structure comprises 321 residues: Ribose-phosphate pyrophosphokinase (321 aa).

Residues 44–46 (DGE) and 103–104 (RQ) each bind ATP. His137 and Asp179 together coordinate Mg(2+). Lys202 is a catalytic residue. Residues Arg204, Asp228, and 232-236 (DTAGT) contribute to the D-ribose 5-phosphate site.

The protein belongs to the ribose-phosphate pyrophosphokinase family. Class I subfamily. As to quaternary structure, homohexamer. Mg(2+) is required as a cofactor.

It localises to the cytoplasm. It catalyses the reaction D-ribose 5-phosphate + ATP = 5-phospho-alpha-D-ribose 1-diphosphate + AMP + H(+). It participates in metabolic intermediate biosynthesis; 5-phospho-alpha-D-ribose 1-diphosphate biosynthesis; 5-phospho-alpha-D-ribose 1-diphosphate from D-ribose 5-phosphate (route I): step 1/1. Involved in the biosynthesis of the central metabolite phospho-alpha-D-ribosyl-1-pyrophosphate (PRPP) via the transfer of pyrophosphoryl group from ATP to 1-hydroxyl of ribose-5-phosphate (Rib-5-P). The protein is Ribose-phosphate pyrophosphokinase of Staphylococcus epidermidis (strain ATCC 35984 / DSM 28319 / BCRC 17069 / CCUG 31568 / BM 3577 / RP62A).